Reading from the N-terminus, the 341-residue chain is Eukaryotic translation initiation factor 2 subunit 1 (341 aa).

An S1 motif domain is found at 16 to 87 (EDVVMVNVLS…EKGYIDLSKR (72 aa)). A Phosphoserine modification is found at S51. The disordered stretch occupies residues 293-341 (AENAQVAGDDDEEDGADQEGMQFDPEKEFNHKGSGAGRANEEDEEEEED). Positions 300–309 (GDDDEEDGAD) are enriched in acidic residues.

Belongs to the eIF-2-alpha family. As to quaternary structure, eukaryotic translation initiation factor 2 eIF2 is a heterotrimeric complex composed of an alpha, a beta and a gamma subunit. Phosphorylation of eIF-2-alpha impairs the recycling of eIF-2 between successive rounds of initiation and thus leads to inhibition of translation.

It localises to the cytoplasm. Its subcellular location is the cytosol. Its function is as follows. eIF-2 functions in the early steps of protein synthesis by forming a ternary complex with GTP and initiator tRNA. This pre-initiation complex mediates ribosomal recognition of a start codon during the scanning process of the leader region. This chain is Eukaryotic translation initiation factor 2 subunit 1, found in Drosophila melanogaster (Fruit fly).